Reading from the N-terminus, the 423-residue chain is Gamma-glutamyl phosphate reductase (423 aa).

This sequence belongs to the gamma-glutamyl phosphate reductase family.

It localises to the cytoplasm. The catalysed reaction is L-glutamate 5-semialdehyde + phosphate + NADP(+) = L-glutamyl 5-phosphate + NADPH + H(+). Its pathway is amino-acid biosynthesis; L-proline biosynthesis; L-glutamate 5-semialdehyde from L-glutamate: step 2/2. Its function is as follows. Catalyzes the NADPH-dependent reduction of L-glutamate 5-phosphate into L-glutamate 5-semialdehyde and phosphate. The product spontaneously undergoes cyclization to form 1-pyrroline-5-carboxylate. The protein is Gamma-glutamyl phosphate reductase of Paraburkholderia phytofirmans (strain DSM 17436 / LMG 22146 / PsJN) (Burkholderia phytofirmans).